The following is a 312-amino-acid chain: Olfactory receptor 2L5 (312 aa).

At 1-24 (MENYNQTSTDFILLGLFPPSKIGL) the chain is on the extracellular side. The N-linked (GlcNAc...) asparagine glycan is linked to asparagine 5. Residues 25-48 (FLFILFVLIFLMALIGNLSMILLI) form a helical membrane-spanning segment. The Cytoplasmic portion of the chain corresponds to 49–56 (FLDTHLHT). The chain crosses the membrane as a helical span at residues 57 to 78 (PMYFLLSQLSLIDLNYISTIVP). The Extracellular portion of the chain corresponds to 79–99 (KMASDFLYGNKSISFIGCGIQ). Cysteine 96 and cysteine 188 form a disulfide bridge. A helical membrane pass occupies residues 100–119 (SFFFMTFAGAEALLLTSMAY). Residues 120-138 (DRYVAICFPLHYPIRMSKR) are Cytoplasmic-facing. A helical membrane pass occupies residues 139 to 157 (MYVLMITGSWMIGSINSCA). Residues 158-194 (HTVYAFRIPYCKSRAINHFFCDVPAMLTLACTDTWVY) are Extracellular-facing. Residues 195 to 218 (EYTVFLSSTIFLVFPFTGIACSYG) form a helical membrane-spanning segment. Residues 219–235 (WVLLAVYRMHSAEGRKK) lie on the Cytoplasmic side of the membrane. A helical membrane pass occupies residues 236 to 258 (AYSTCSTHLTVVTFYYAPFAYTY). Residues 259-271 (LCPRSLRSLTEDK) are Extracellular-facing. Residues 272 to 291 (VLAVFYTILTPMLNPIIYSL) traverse the membrane as a helical segment. Residues 292-312 (RNKEVMGALTRVIQNIFSVKM) are Cytoplasmic-facing.

This sequence belongs to the G-protein coupled receptor 1 family.

The protein localises to the cell membrane. In terms of biological role, odorant receptor. The chain is Olfactory receptor 2L5 (OR2L5) from Homo sapiens (Human).